A 288-amino-acid chain; its full sequence is Capsid protein (288 aa).

N-acetylalanine; by host is present on A2.

It belongs to the high plain virus capsid family.

It is found in the virion. The protein is Capsid protein of High plains virus (isolate Kansas 2004).